A 413-amino-acid chain; its full sequence is Amino acid transporter AVT3B (413 aa).

The Cytoplasmic portion of the chain corresponds to 1-27 (MGLEEQGRAREDTPLLGKGRPLSSKFK). A helical membrane pass occupies residues 28–48 (TFANVFIAIVGAGVLGLPYAF). Residues 49 to 54 (KRTGWL) are Vacuolar-facing. A helical membrane pass occupies residues 55–75 (MGLLTLFSVAALINHCMMLLV). Over 76-103 (HIRRKLGVSNIGSFGDLGFAACGNLGRF) the chain is Cytoplasmic. A helical membrane pass occupies residues 104 to 124 (VVDILIILSQAGFCVGYLIFI). The Vacuolar portion of the chain corresponds to 125-145 (GNTLANLSKPTKSTTLMSLRH). A helical membrane pass occupies residues 146–166 (LMGVSPKSLYIWGCFPFQLGL). The Cytoplasmic segment spans residues 167-174 (NSIKTLTH). A helical transmembrane segment spans residues 175–195 (LAPLSIFADVVDLGAMAVVIV). Over 196-207 (EDIKITVVQRPQ) the chain is Vacuolar. The chain crosses the membrane as a helical span at residues 208–228 (VVAFGGMSVFFYGMGVAVYAF). The Cytoplasmic segment spans residues 229–249 (EGVGMVLPLESETKDKDKFGK). The helical transmembrane segment at 250 to 270 (VLALSMLFIAVMYGSFGVLGY) threads the bilayer. The Vacuolar portion of the chain corresponds to 271 to 288 (MAFGDDTMDIITANLGAG). A helical membrane pass occupies residues 289–309 (VVSSLVQLGLCINLFFTFPLM). Residues 310–331 (MNPVFEIVERRFWSGMYCVWLR) lie on the Cytoplasmic side of the membrane. The chain crosses the membrane as a helical span at residues 332–352 (WLLVLAVTLVALLVPNFADFL). Over 353–355 (SLV) the chain is Vacuolar. A helical transmembrane segment spans residues 356-376 (GSSVCCALGFVLPSLFHLMVF). Topologically, residues 377–390 (KDEMEWKQRALDVG) are cytoplasmic. The helical transmembrane segment at 391–411 (ILLLGVILGVSGTWSSLTEIF) threads the bilayer. Residues 412 to 413 (QE) lie on the Vacuolar side of the membrane.

It belongs to the amino acid/polyamine transporter 2 family. Amino acid/auxin permease (AAAP) (TC 2.A.18.8) subfamily. Ubiquitous.

It is found in the vacuole membrane. In terms of biological role, translocates preferentially neutral amino acids from the vacuole to the cytoplasm. The sequence is that of Amino acid transporter AVT3B from Arabidopsis thaliana (Mouse-ear cress).